The chain runs to 393 residues: S-adenosylmethionine synthase 3 (393 aa).

Residue Glu-9 coordinates Mg(2+). His-15 provides a ligand contact to ATP. Glu-43 lines the K(+) pocket. Residues Glu-56 and Gln-99 each contribute to the L-methionine site. ATP-binding positions include 167-169 (NGK), 235-238 (SGRF), Asp-246, 252-253 (RK), Ala-269, Lys-273, and Lys-277. Position 246 (Asp-246) interacts with L-methionine. Lys-277 contributes to the L-methionine binding site.

This sequence belongs to the AdoMet synthase family. In terms of assembly, homotetramer. Mn(2+) serves as cofactor. Mg(2+) is required as a cofactor. Requires Co(2+) as cofactor. The cofactor is K(+). In terms of tissue distribution, mostly expressed in flowers, seedpods and roots, and, to a lower extent, in stems and leaves.

It is found in the cytoplasm. The catalysed reaction is L-methionine + ATP + H2O = S-adenosyl-L-methionine + phosphate + diphosphate. It functions in the pathway amino-acid biosynthesis; S-adenosyl-L-methionine biosynthesis; S-adenosyl-L-methionine from L-methionine: step 1/1. Its function is as follows. Catalyzes the formation of S-adenosylmethionine from methionine and ATP. The reaction comprises two steps that are both catalyzed by the same enzyme: formation of S-adenosylmethionine (AdoMet) and triphosphate, and subsequent hydrolysis of the triphosphate. This chain is S-adenosylmethionine synthase 3 (MSAMS3), found in Brassica juncea (Indian mustard).